The chain runs to 62 residues: uncharacterized protein (62 aa).

Residues 26–62 (YELATLYEAMQKENEEQIEQSKNKLERLRKEWIRLNG) adopt a coiled-coil conformation.

This is an uncharacterized protein from Bacillus subtilis (strain 168).